Reading from the N-terminus, the 348-residue chain is MSDGSRKSGTKSTFHFVAGLGSGVLSAILLQPIDLLKTRVQQSGKHSLRAALAELRSSQQGLLPSLWRGTLPSALRTGFGSAIYFTTLNTIRENAARHLPSLAAAAPTIAAASGIVAPNANQTSSSLPKLSNTGNLLAGAVARSFAGFILMPLTVLKVRYESSFYKYTSLAGAARDIARTEGARGFFAGFGATAIRDAPYAGLYVLFYEKSKQHLSNLFPQPPQPQLSTTTTLEAAAGQDGGGRMSQSRAASINFASGVFSAIICSIISNPFDAVKTRIQLQPKKYRNMVQASRKMLAEEGVRSMMDGLALRMSRKAMSSALAWTVYEELIRRAEGAWTKRGPEEVQL.

Solcar repeat units lie at residues 10-94 (TKST…IREN), 130-214 (LSNT…SKQH), and 249-333 (RAAS…LIRR). A run of 6 helical transmembrane segments spans residues 16–41 (FVAG…TRVQ), 69–95 (GTLP…RENA), 136–161 (LLAG…VRYE), 189–212 (GFGA…EKSK), 253–279 (INFA…KTRI), and 308–326 (GLAL…AWTV).

This sequence belongs to the mitochondrial carrier (TC 2.A.29) family. SLC25A38 subfamily.

The protein localises to the mitochondrion inner membrane. It carries out the reaction glycine(in) = glycine(out). In terms of biological role, mitochondrial glycine transporter that imports glycine into the mitochondrial matrix. Plays an important role in providing glycine for the first enzymatic step in heme biosynthesis, the condensation of glycine with succinyl-CoA to produce 5-aminolevulinate (ALA) in the mitochondrial matrix. In Neurospora crassa (strain ATCC 24698 / 74-OR23-1A / CBS 708.71 / DSM 1257 / FGSC 987), this protein is Mitochondrial glycine transporter (mic-13).